Consider the following 101-residue polypeptide: Replication restart protein PriB (101 aa).

One can recognise an SSB domain in the interval 1–101; the sequence is MTTNNLVLAG…LHAENVELKT (101 aa).

The protein belongs to the PriB family. In terms of assembly, homodimer. Interacts with PriA and DnaT. Component of the replication restart primosome. Primosome assembly occurs via a 'hand-off' mechanism. PriA binds to replication forks, subsequently PriB then DnaT bind; DnaT then displaces ssDNA to generate the helicase loading substrate.

Involved in the restart of stalled replication forks, which reloads the replicative helicase on sites other than the origin of replication; the PriA-PriB pathway is the major replication restart pathway. During primosome assembly it facilitates complex formation between PriA and DnaT on DNA; stabilizes PriA on DNA. Stimulates the DNA unwinding activity of PriA helicase. This Shewanella piezotolerans (strain WP3 / JCM 13877) protein is Replication restart protein PriB.